The following is a 73-amino-acid chain: Myosin-IB light chain (73 aa).

EF-hand domains lie at 3 to 38 (DEKT…GLPM) and 38 to 73 (MTEA…VDES). Ca(2+) is bound by residues D16, D18, D20, and E27.

Myosin I is a dimer of a heavy and a light chain. Inability to self-assemble into filaments. Interacts with myoB. Does not interact with myoC or myoD.

In terms of biological role, functions as the light chain for myosin-B. Binds calcium with submicromolar affinity and may sense physiological calcium changes. In Dictyostelium discoideum (Social amoeba), this protein is Myosin-IB light chain (mlcB).